Here is a 100-residue protein sequence, read N- to C-terminus: Small ribosomal subunit protein uS14c (100 aa).

Belongs to the universal ribosomal protein uS14 family. Part of the 30S ribosomal subunit.

It localises to the plastid. The protein resides in the chloroplast. Binds 16S rRNA, required for the assembly of 30S particles. The polypeptide is Small ribosomal subunit protein uS14c (Bigelowiella natans (Pedinomonas minutissima)).